Consider the following 318-residue polypeptide: MISQIISSFLTFVMILIAVAFLTLIERKVLGYMQLRKGPNIVGPFGLLQPFADGIKLFIKEPLQPSYASIFLFILAPALAISLALILWISLPLPLALSDMNLGLMFILAISSLSVYSLLTSGWASNSKYALMGALRAVAQTISYEVTLGLMIVALTILSGGFDLKLFIDLQNKIWLLFPMWPIFLMWFISTLAETNRSPFDLTEGESELVSGFNVEFSGGLFALFFLAEYANILFMNSLTVVLFMGSSNLSSLYFSASMTMKTMFLIFLFLWVRASYPRFRYDQLMHLMWKNFLPITLSLLIFQFSMSLFFGVSPSAI.

A run of 8 helical transmembrane segments spans residues 5–25 (IISS…LTLI), 69–89 (SIFL…ILWI), 102–122 (LGLM…LTSG), 148–168 (LGLM…KLFI), 174–194 (IWLL…TLAE), 215–235 (VEFS…NILF), 253–273 (LYFS…FLWV), and 293–313 (FLPI…FFGV).

The protein belongs to the complex I subunit 1 family.

Its subcellular location is the mitochondrion inner membrane. The enzyme catalyses a ubiquinone + NADH + 5 H(+)(in) = a ubiquinol + NAD(+) + 4 H(+)(out). Its function is as follows. Core subunit of the mitochondrial membrane respiratory chain NADH dehydrogenase (Complex I) that is believed to belong to the minimal assembly required for catalysis. Complex I functions in the transfer of electrons from NADH to the respiratory chain. The immediate electron acceptor for the enzyme is believed to be ubiquinone. The protein is NADH-ubiquinone oxidoreductase chain 1 (MT-ND1) of Myxine glutinosa (Atlantic hagfish).